Reading from the N-terminus, the 132-residue chain is Small ribosomal subunit protein uS8 (132 aa).

This sequence belongs to the universal ribosomal protein uS8 family. In terms of assembly, part of the 30S ribosomal subunit. Contacts proteins S5 and S12.

Functionally, one of the primary rRNA binding proteins, it binds directly to 16S rRNA central domain where it helps coordinate assembly of the platform of the 30S subunit. This chain is Small ribosomal subunit protein uS8, found in Renibacterium salmoninarum (strain ATCC 33209 / DSM 20767 / JCM 11484 / NBRC 15589 / NCIMB 2235).